The following is a 1338-amino-acid chain: Aldehyde oxidase (1338 aa).

The 2Fe-2S ferredoxin-type domain maps to 5 to 92; that stretch reads SELLFYVNGR…GAAVTTVEGI (88 aa). Residues C44, C49, C52, and C74 each coordinate [2Fe-2S] cluster. Q113 lines the Mo-molybdopterin pocket. [2Fe-2S] cluster-binding residues include C114, C117, C149, and C151. Residue C151 coordinates Mo-molybdopterin. Positions 236–421 constitute an FAD-binding PCMH-type domain; sequence FGSERMMWFS…VSVNIPYSRK (186 aa). Residues 264–271, A345, S354, H358, D367, and L411 contribute to the FAD site; that span reads VIMGNTSV. Residues 806–807 and M1047 contribute to the Mo-molybdopterin site; that span reads AF. S1068 is subject to Phosphoserine. Residues 1088-1091, Q1203, and L1268 each bind Mo-molybdopterin; that span reads GSVV. E1270 acts as the Proton acceptor; for azaheterocycle hydroxylase activity in catalysis.

This sequence belongs to the xanthine dehydrogenase family. Homodimer. It depends on [2Fe-2S] cluster as a cofactor. The cofactor is FAD. Requires Mo-molybdopterin as cofactor. As to expression, abundant in liver, expressed in adipose tissue and at lower levels in lung, skeletal muscle, pancreas. In contrast to mice, no significant gender difference in AOX1 expression level (at protein level).

It localises to the cytoplasm. The catalysed reaction is an aldehyde + O2 + H2O = a carboxylate + H2O2 + H(+). It carries out the reaction retinal + O2 + H2O = retinoate + H2O2 + H(+). Is very potently inhibited by raloxifene. Also inhibited by estradiol, ethinyl estradiol, hydralazine, menadione, isovanillin and thioridazine. Not inhibited by allopurinol, a xanthine dehydrogenase potent inhibitor. Functionally, oxidase with broad substrate specificity, oxidizing aromatic azaheterocycles, such as N1-methylnicotinamide, N-methylphthalazinium and phthalazine, as well as aldehydes, such as benzaldehyde, retinal, pyridoxal, and vanillin. Plays a key role in the metabolism of xenobiotics and drugs containing aromatic azaheterocyclic substituents. Participates in the bioactivation of prodrugs such as famciclovir, catalyzing the oxidation step from 6-deoxypenciclovir to penciclovir, which is a potent antiviral agent. Is probably involved in the regulation of reactive oxygen species homeostasis. May be a prominent source of superoxide generation via the one-electron reduction of molecular oxygen. May also catalyze nitric oxide (NO) production via the reduction of nitrite to NO with NADH or aldehyde as electron donor. May play a role in adipogenesis. This Homo sapiens (Human) protein is Aldehyde oxidase.